Here is a 205-residue protein sequence, read N- to C-terminus: Isochorismatase domain-containing protein 2 (205 aa).

The protein belongs to the isochorismatase family.

The protein is Isochorismatase domain-containing protein 2 (isoc2) of Xenopus laevis (African clawed frog).